We begin with the raw amino-acid sequence, 45 residues long: Putative potassium channel blocker (45 aa).

As to expression, expressed by the venom gland.

Its subcellular location is the secreted. Inhibits potassium channels. This is Putative potassium channel blocker from Hottentotta tamulus (Eastern Indian scorpion).